Consider the following 727-residue polypeptide: Platelet endothelial cell adhesion molecule (727 aa).

The first 17 residues, 1–17 (MLLALGLTLVLYASLQA), serve as a signal peptide directing secretion. Topologically, residues 18–590 (EENSFTINSI…VRVFLAPWKK (573 aa)) are extracellular. Ig-like C2-type domains are found at residues 40-126 (GQQL…PKVT), 135-213 (GGVV…PIRS), 225-309 (PKFE…IMVN), 315-391 (PKPK…LVPI), 413-472 (GHAI…NCHS), and 488-578 (PVDE…RSST). Cysteine 47 and cysteine 99 are disulfide-bonded. N-linked (GlcNAc...) asparagine glycosylation is found at asparagine 74 and asparagine 141. Cystine bridges form between cysteine 142–cysteine 195 and cysteine 245–cysteine 293. Asparagine 309, asparagine 345, asparagine 360, asparagine 424, and asparagine 540 each carry an N-linked (GlcNAc...) asparagine glycan. Disulfide bonds link cysteine 336/cysteine 375, cysteine 420/cysteine 465, and cysteine 512/cysteine 561. A helical membrane pass occupies residues 591–609 (GLIAVVVIGVVIATLIVAA). Residues 610–727 (KCYFLRKAKA…SRTEGSLNGT (118 aa)) lie on the Cytoplasmic side of the membrane. Cysteine 611 carries the S-palmitoyl cysteine lipid modification. The disordered stretch occupies residues 642 to 672 (SEPSVEANSHYGYDDVSGNDAVKPINQNKDP). 2 consecutive short sequence motifs (ITIM motif) follow at residues 677-682 (VEYTEV) and 700-705 (TVYSEI). A phosphotyrosine; by FER mark is found at tyrosine 679 and tyrosine 702. Residues 698-718 (TETVYSEIRKVDPNLMENRYS) form a membrane-bound segment which detaches upon phosphorylation region. Positions 710-727 (PNLMENRYSRTEGSLNGT) are may play a role in cytoprotective signaling. Serine 718 and serine 723 each carry phosphoserine.

In terms of assembly, trans-homodimer (via Ig-like C2-type 1 and Ig-like C2-type 2 domains); trans-homodimerization is required for cell-cell interaction. Forms a complex with BDKRB2 and GNAQ. Interacts with BDKRB2 and GNAQ. Interacts with PTPN11; Tyr-702 is critical for PTPN11 recruitment. Interacts with FER. Interacts with CD177; the interaction is Ca(2+)-dependent; the interaction is direct. In terms of processing, phosphorylated on Ser and Tyr residues by src kinases after cellular activation. Upon activation, phosphorylated on Ser-718 which probably initiates the dissociation of the membrane-interaction segment (residues 698-718) from the cell membrane allowing the sequential phosphorylation of Tyr-702 and Tyr-679. Constitutively phosphorylated on Ser-723 in resting platelets. Phosphorylated on tyrosine residues by FER and FES in response to FCER1 activation. In endothelial cells Fyn mediates mechanical-force (stretch or pull) induced tyrosine phosphorylation. Palmitoylation by ZDHHC21 is necessary for cell surface expression in endothelial cells and enrichment in membrane rafts. In terms of tissue distribution, expressed in lung and platelets (at protein level).

The protein resides in the cell membrane. Its subcellular location is the membrane raft. It localises to the cell junction. In terms of biological role, cell adhesion molecule which is required for leukocyte transendothelial migration (TEM) under most inflammatory conditions. Tyr-679 plays a critical role in TEM and is required for efficient trafficking of PECAM1 to and from the lateral border recycling compartment (LBRC) and is also essential for the LBRC membrane to be targeted around migrating leukocytes. Trans-homophilic interaction may play a role in endothelial cell-cell adhesion via cell junctions. Heterophilic interaction with CD177 plays a role in transendothelial migration of neutrophils. Homophilic ligation of PECAM1 prevents macrophage-mediated phagocytosis of neighboring viable leukocytes by transmitting a detachment signal. Promotes macrophage-mediated phagocytosis of apoptotic leukocytes by tethering them to the phagocytic cells; PECAM1-mediated detachment signal appears to be disabled in apoptotic leukocytes. Modulates bradykinin receptor BDKRB2 activation. Regulates bradykinin- and hyperosmotic shock-induced ERK1/2 activation in endothelial cells. Induces susceptibility to atherosclerosis. In Mus musculus (Mouse), this protein is Platelet endothelial cell adhesion molecule (Pecam1).